We begin with the raw amino-acid sequence, 295 residues long: Taste receptor type 2 member 120 (295 aa).

Residues 1-5 (MDLTE) lie on the Extracellular side of the membrane. Residues 6 to 26 (WIVTIIMMIEFLLGNCANFFI) form a helical membrane-spanning segment. At 27 to 45 (MVVNAIDCMKRRKISSADR) the chain is on the cytoplasmic side. The chain crosses the membrane as a helical span at residues 46–66 (IITALAISRIGLLWAMLMNWH). The Extracellular portion of the chain corresponds to 67 to 83 (SRVYTTDTYSFQVTAFS). The chain crosses the membrane as a helical span at residues 84 to 104 (GIIWAITNHFTTWLGTILSMF). Residues 105 to 125 (YLFKIANFSNCLFLHLKRKLD) are Cytoplasmic-facing. The chain crosses the membrane as a helical span at residues 126–146 (SVLLVIFLVSSLLVFAYLGVV). At 147–177 (NIKKIAWLSVHEGNVTVKSKLMNIASIRDTL) the chain is on the extracellular side. Asn-160 carries N-linked (GlcNAc...) asparagine glycosylation. A helical transmembrane segment spans residues 178–198 (LFSLINIAPFGISLTCVLLLI). Topologically, residues 199–230 (YSLGKHLKNMKFYGKGCQDQSTMVHIRALQTV) are cytoplasmic. Residues 231 to 251 (VSFLLLYATYSSCVIISGWSI) form a helical membrane-spanning segment. Residues 252–255 (QNVP) lie on the Extracellular side of the membrane. A helical membrane pass occupies residues 256–276 (IFLFCVTIGAFYPAGHSCILI). Residues 277-295 (WGNQKLKQFLLLFLRQMKC) lie on the Cytoplasmic side of the membrane.

The protein belongs to the G-protein coupled receptor T2R family.

Its subcellular location is the membrane. Putative taste receptor which may play a role in the perception of bitterness. This Rattus norvegicus (Rat) protein is Taste receptor type 2 member 120.